A 76-amino-acid chain; its full sequence is Acyl carrier protein (76 aa).

The Carrier domain maps to 1-75; sequence MVFEKIKALI…DIVFYITKNT (75 aa). An O-(pantetheine 4'-phosphoryl)serine modification is found at S35.

Belongs to the acyl carrier protein (ACP) family. 4'-phosphopantetheine is transferred from CoA to a specific serine of apo-ACP by AcpS. This modification is essential for activity because fatty acids are bound in thioester linkage to the sulfhydryl of the prosthetic group.

It localises to the cytoplasm. Its pathway is lipid metabolism; fatty acid biosynthesis. In terms of biological role, carrier of the growing fatty acid chain in fatty acid biosynthesis. The polypeptide is Acyl carrier protein (Onion yellows phytoplasma (strain OY-M)).